The following is a 117-amino-acid chain: Non-specific lipid-transfer protein 3 (117 aa).

The signal sequence occupies residues 1-25; that stretch reads MAGLVKLSCLVLACMIVAGPIATNA. 4 cysteine pairs are disulfide-bonded: C29–C76, C39–C53, C54–C99, and C74–C113.

It belongs to the plant LTP family.

Functionally, plant non-specific lipid-transfer proteins transfer phospholipids as well as galactolipids across membranes. May play a role in wax or cutin deposition in the cell walls of expanding epidermal cells and certain secretory tissues. The chain is Non-specific lipid-transfer protein 3 (LTP3) from Brassica napus (Rape).